Reading from the N-terminus, the 268-residue chain is Small ribosomal subunit protein eS1 (268 aa).

Positions 1–21 (MAVGKNKGLSKGGKKGGKKKV) are disordered.

This sequence belongs to the eukaryotic ribosomal protein eS1 family. Component of the small ribosomal subunit. Mature ribosomes consist of a small (40S) and a large (60S) subunit. The 40S subunit contains about 33 different proteins and 1 molecule of RNA (18S). The 60S subunit contains about 49 different proteins and 3 molecules of RNA (28S, 5.8S and 5S).

It is found in the cytoplasm. Functionally, essential for oogenesis; required for late follicle cell development. The protein is Small ribosomal subunit protein eS1 of Drosophila mojavensis (Fruit fly).